The chain runs to 286 residues: Cytotoxin (286 aa).

Residues 267–286 constitute a propeptide that is removed on maturation; the sequence is TFYNYASLVPDLETRVRSAE.

The protein belongs to the aerolysin family.

It is found in the secreted. In terms of biological role, cytotoxin is thought to form hydrophilic pores in cell membranes. In Pseudomonas aeruginosa, this protein is Cytotoxin (ctx).